The primary structure comprises 53 residues: Photosystem II reaction center protein K (53 aa).

A propeptide spanning residues 1-16 is cleaved from the precursor; it reads MFYTNVETLLNTNCFA. Residues 28–48 traverse the membrane as a helical segment; that stretch reads LVDVLPIIPLLFLLLAFVWQA.

This sequence belongs to the PsbK family. In terms of assembly, PSII is composed of 1 copy each of membrane proteins PsbA, PsbB, PsbC, PsbD, PsbE, PsbF, PsbH, PsbI, PsbJ, PsbK, PsbL, PsbM, PsbT, PsbY, PsbZ, Psb30/Ycf12, at least 3 peripheral proteins of the oxygen-evolving complex and a large number of cofactors. It forms dimeric complexes.

It localises to the plastid. The protein localises to the chloroplast thylakoid membrane. Functionally, one of the components of the core complex of photosystem II (PSII). PSII is a light-driven water:plastoquinone oxidoreductase that uses light energy to abstract electrons from H(2)O, generating O(2) and a proton gradient subsequently used for ATP formation. It consists of a core antenna complex that captures photons, and an electron transfer chain that converts photonic excitation into a charge separation. The polypeptide is Photosystem II reaction center protein K (Euglena anabaena (Euglenaria anabaena)).